A 278-amino-acid polypeptide reads, in one-letter code: MTFGEKLLNAASTRGRLCVGIDPHESLLTSWGLPVNVDGLAEFSRACVEAFADTVALVKPQVAFYERFGSAGFAILEETIQTLRERGCLVVSDAKRGDIGSTMAGYASAWLDPASPLSSDAVTVSPYLGFHSLDPVFELAEQHGRGVFVLAATSNPEARELQDQQNADGVSISQQIVDQAAALNAPYMAQGKAGNIGVVIGATLSKPPRLSTLGGAILMPGVGAQGGTASDVDEIAGDMAHLAFPNVSRSILATGPDIAEMKNSVAKTAADFPGFPRS.

The Proton donor role is filled by Lys95.

This sequence belongs to the OMP decarboxylase family. Type 2 subfamily.

It carries out the reaction orotidine 5'-phosphate + H(+) = UMP + CO2. It functions in the pathway pyrimidine metabolism; UMP biosynthesis via de novo pathway; UMP from orotate: step 2/2. The sequence is that of Orotidine 5'-phosphate decarboxylase from Corynebacterium glutamicum (strain R).